The following is a 391-amino-acid chain: Glutamate 5-kinase (391 aa).

Residue Lys-17 coordinates ATP. Substrate-binding residues include Ser-57, Asp-144, and Asn-156. ATP contacts are provided by residues 176–177 and 216–222; these read SD and TGGMTTK. The PUA domain maps to 278–356; sequence QGQIVIDDGA…AWLAAEMGPA (79 aa). Positions 370-391 are disordered; that stretch reads SRRRKAEPSSRNQKSSGSRVTS. The span at 378-391 shows a compositional bias: polar residues; the sequence is SSRNQKSSGSRVTS.

It belongs to the glutamate 5-kinase family.

It localises to the cytoplasm. The catalysed reaction is L-glutamate + ATP = L-glutamyl 5-phosphate + ADP. It participates in amino-acid biosynthesis; L-proline biosynthesis; L-glutamate 5-semialdehyde from L-glutamate: step 1/2. Functionally, catalyzes the transfer of a phosphate group to glutamate to form L-glutamate 5-phosphate. The sequence is that of Glutamate 5-kinase from Cutibacterium acnes (strain DSM 16379 / KPA171202) (Propionibacterium acnes).